The primary structure comprises 270 residues: Protein FAM110D (270 aa).

Positions 1-16 (MLLASPSTPSRGRTPS) are enriched in low complexity. Disordered regions lie at residues 1-83 (MLLA…RPDS), 117-142 (RDVASSSAGSSERPAAPGGWTAPQDA), and 186-244 (PQSW…QVSV). Basic residues predominate over residues 68 to 78 (RPARRGSGRRL).

Belongs to the FAM110 family.

This is Protein FAM110D (FAM110D) from Bos taurus (Bovine).